The sequence spans 843 residues: Protein P (843 aa).

Residues 1–177 (MPLSYQHFRR…FCGSPYSWEQ (177 aa)) form a terminal protein domain (TP) region. The spacer stretch occupies residues 178–346 (ELQHGSTSLN…YCLSHIINLL (169 aa)). Disordered stretches follow at residues 180–202 (QHGS…AQSS) and 226–315 (QHKQ…VGSE). Over residues 239 to 249 (RSGRLRSRVHT) the composition is skewed to basic residues. Polar residues-rich tracts occupy residues 262 to 277 (TGHS…SCFH) and 287 to 299 (PSLS…TSTG). Positions 347-690 (EDWGPCYEHG…YMNLYPVARQ (344 aa)) are polymerase/reverse transcriptase domain (RT). One can recognise a Reverse transcriptase domain in the interval 357–600 (EHHIRTPKTP…YSLHFMGYII (244 aa)). Positions 429, 551, and 552 each coordinate Mg(2+).

Belongs to the hepadnaviridae P protein family.

It carries out the reaction DNA(n) + a 2'-deoxyribonucleoside 5'-triphosphate = DNA(n+1) + diphosphate. It catalyses the reaction Endonucleolytic cleavage to 5'-phosphomonoester.. Its activity is regulated as follows. Activated by host HSP70 and HSP40 in vitro to be able to bind the epsilon loop of the pgRNA. Because deletion of the RNase H region renders the protein partly chaperone-independent, the chaperones may be needed indirectly to relieve occlusion of the RNA-binding site by this domain. Inhibited by several reverse-transcriptase inhibitors: Lamivudine, Adefovir and Entecavir. Functionally, multifunctional enzyme that converts the viral RNA genome into dsDNA in viral cytoplasmic capsids. This enzyme displays a DNA polymerase activity that can copy either DNA or RNA templates, and a ribonuclease H (RNase H) activity that cleaves the RNA strand of RNA-DNA heteroduplexes in a partially processive 3'- to 5'-endonucleasic mode. Neo-synthesized pregenomic RNA (pgRNA) are encapsidated together with the P protein, and reverse-transcribed inside the nucleocapsid. Initiation of reverse-transcription occurs first by binding the epsilon loop on the pgRNA genome, and is initiated by protein priming, thereby the 5'-end of (-)DNA is covalently linked to P protein. Partial (+)DNA is synthesized from the (-)DNA template and generates the relaxed circular DNA (RC-DNA) genome. After budding and infection, the RC-DNA migrates in the nucleus, and is converted into a plasmid-like covalently closed circular DNA (cccDNA). The activity of P protein does not seem to be necessary for cccDNA generation, and is presumably released from (+)DNA by host nuclear DNA repair machinery. The protein is Protein P of Hepatitis B virus genotype H (isolate United States/LAS2523/2002) (HBV-H).